Consider the following 475-residue polypeptide: Ankyrin repeat, SAM and basic leucine zipper domain-containing protein 1 (475 aa).

The tract at residues 1 to 22 is disordered; the sequence is MAAGALRGLPVAGGGESSESED. Phosphoserine occurs at positions 17, 18, and 20. ANK repeat units lie at residues 45-74, 78-107, 110-144, 148-177, 181-210, and 214-243; these read EKKE…SVDS, YGWT…NASF, DKQT…DPNV, RLMT…EVNT, NGYT…NKML, and DGKM…PLEG. An SAM domain is found at 272–334; that stretch reads SYTAFGDLEV…KILATLKELQ (63 aa).

As to quaternary structure, interacts with DDX4, PIWIL1, RANBP9 and TDRD1.

It localises to the cytoplasm. In terms of biological role, plays a central role during spermatogenesis by repressing transposable elements and preventing their mobilization, which is essential for the germline integrity. Acts via the piRNA metabolic process, which mediates the repression of transposable elements during meiosis by forming complexes composed of piRNAs and Piwi proteins and governs the methylation and subsequent repression of transposons. Its association with pi-bodies suggests a participation in the primary piRNAs metabolic process. Required prior to the pachytene stage to facilitate the production of multiple types of piRNAs, including those associated with repeats involved in the regulation of retrotransposons. May act by mediating protein-protein interactions during germ cell maturation. In Colobus guereza (Mantled guereza), this protein is Ankyrin repeat, SAM and basic leucine zipper domain-containing protein 1 (ASZ1).